Here is a 278-residue protein sequence, read N- to C-terminus: D-aminoacyl-tRNA deacylase (278 aa).

Belongs to the DtdA deacylase family. As to quaternary structure, monomer. The cofactor is Zn(2+).

The enzyme catalyses a D-aminoacyl-tRNA + H2O = a tRNA + a D-alpha-amino acid + H(+). It carries out the reaction glycyl-tRNA(Ala) + H2O = tRNA(Ala) + glycine + H(+). D-aminoacyl-tRNA deacylase with broad substrate specificity. By recycling D-aminoacyl-tRNA to D-amino acids and free tRNA molecules, this enzyme counteracts the toxicity associated with the formation of D-aminoacyl-tRNA entities in vivo. The sequence is that of D-aminoacyl-tRNA deacylase from Archaeoglobus fulgidus (strain ATCC 49558 / DSM 4304 / JCM 9628 / NBRC 100126 / VC-16).